A 182-amino-acid chain; its full sequence is Kappa-casein (182 aa).

An N-terminal signal peptide occupies residues methionine 1 to valine 20. Threonine 133, threonine 143, threonine 148, and threonine 151 each carry an O-linked (GalNAc...) threonine glycan. Threonine 157 is subject to Phosphothreonine; alternate. An O-linked (GalNAc...) threonine; alternate glycan is attached at threonine 157. O-linked (GalNAc...) threonine glycans are attached at residues threonine 167, threonine 169, and threonine 178.

It belongs to the kappa-casein family. In terms of assembly, heteromultimers composed of alpha-s1 casein and kappa casein linked by disulfide bonds. In terms of processing, the N-terminus is blocked. Mammary gland specific. Secreted in milk.

The protein resides in the secreted. In terms of biological role, kappa-casein stabilizes micelle formation, preventing casein precipitation in milk. This is Kappa-casein (CSN3) from Homo sapiens (Human).